The following is a 293-amino-acid chain: ATP synthase subunit a (293 aa).

The next 6 helical transmembrane spans lie at 40–60 (DSLF…WLAA), 98–118 (FVAP…ALDL), 151–171 (DLNV…YYGI), 188–208 (FHAH…LNLI), 225–245 (MFAG…WTGF), and 264–284 (AIFH…LTLV).

This sequence belongs to the ATPase A chain family. F-type ATPases have 2 components, CF(1) - the catalytic core - and CF(0) - the membrane proton channel. CF(1) has five subunits: alpha(3), beta(3), gamma(1), delta(1), epsilon(1). CF(0) has three main subunits: a(1), b(2) and c(9-12). The alpha and beta chains form an alternating ring which encloses part of the gamma chain. CF(1) is attached to CF(0) by a central stalk formed by the gamma and epsilon chains, while a peripheral stalk is formed by the delta and b chains.

It is found in the cell inner membrane. Its function is as follows. Key component of the proton channel; it plays a direct role in the translocation of protons across the membrane. This chain is ATP synthase subunit a, found in Bordetella avium (strain 197N).